The chain runs to 309 residues: Ornithine carbamoyltransferase (309 aa).

Residues 52 to 55 (STRT), Gln79, Arg103, and 130 to 133 (HPCQ) each bind carbamoyl phosphate. Residues Asn161, Asp221, and 225-226 (SM) contribute to the L-ornithine site. Carbamoyl phosphate-binding positions include 261–262 (CL) and Arg289.

The protein belongs to the aspartate/ornithine carbamoyltransferase superfamily. OTCase family.

It is found in the cytoplasm. It carries out the reaction carbamoyl phosphate + L-ornithine = L-citrulline + phosphate + H(+). It functions in the pathway amino-acid biosynthesis; L-arginine biosynthesis; L-arginine from L-ornithine and carbamoyl phosphate: step 1/3. Functionally, reversibly catalyzes the transfer of the carbamoyl group from carbamoyl phosphate (CP) to the N(epsilon) atom of ornithine (ORN) to produce L-citrulline. In Methanoculleus marisnigri (strain ATCC 35101 / DSM 1498 / JR1), this protein is Ornithine carbamoyltransferase.